Consider the following 247-residue polypeptide: UPF0280 protein Mevan_0550 (247 aa).

This sequence belongs to the UPF0280 family.

This is UPF0280 protein Mevan_0550 from Methanococcus vannielii (strain ATCC 35089 / DSM 1224 / JCM 13029 / OCM 148 / SB).